A 48-amino-acid chain; its full sequence is ATP synthase protein 8 (48 aa).

The chain crosses the membrane as a helical span at residues 4–24 (LVPFYFINILSFGFLIFTVLL).

The protein belongs to the ATPase protein 8 family. F-type ATPases have 2 components, CF(1) - the catalytic core - and CF(0) - the membrane proton channel.

It localises to the mitochondrion membrane. Mitochondrial membrane ATP synthase (F(1)F(0) ATP synthase or Complex V) produces ATP from ADP in the presence of a proton gradient across the membrane which is generated by electron transport complexes of the respiratory chain. F-type ATPases consist of two structural domains, F(1) - containing the extramembraneous catalytic core and F(0) - containing the membrane proton channel, linked together by a central stalk and a peripheral stalk. During catalysis, ATP synthesis in the catalytic domain of F(1) is coupled via a rotary mechanism of the central stalk subunits to proton translocation. Part of the complex F(0) domain. Minor subunit located with subunit a in the membrane. This Schizosaccharomyces pombe (strain 972 / ATCC 24843) (Fission yeast) protein is ATP synthase protein 8 (atp8).